The primary structure comprises 572 residues: Hemolysin-1 (572 aa).

Its function is as follows. Bacterial hemolysins are exotoxins that attack blood cell membranes and cause cell rupture by mechanisms not clearly defined. The chain is Hemolysin-1 (ash1) from Aeromonas salmonicida.